A 127-amino-acid polypeptide reads, in one-letter code: Fluoride-specific ion channel FluC (127 aa).

4 consecutive transmembrane segments (helical) span residues 4-24, 35-55, 71-91, and 103-123; these read LLLA…LLSM, LGTL…FAWF, TGFC…VFLL, and VFVN…LFSA. Residues G75 and T78 each contribute to the Na(+) site.

This sequence belongs to the fluoride channel Fluc/FEX (TC 1.A.43) family.

Its subcellular location is the cell inner membrane. The enzyme catalyses fluoride(in) = fluoride(out). Na(+) is not transported, but it plays an essential structural role and its presence is essential for fluoride channel function. In terms of biological role, fluoride-specific ion channel. Important for reducing fluoride concentration in the cell, thus reducing its toxicity. In Escherichia coli (strain K12 / MC4100 / BW2952), this protein is Fluoride-specific ion channel FluC.